We begin with the raw amino-acid sequence, 188 residues long: GTP cyclohydrolase 1 (188 aa).

Residues Cys73, His76, and Cys144 each contribute to the Zn(2+) site.

The protein belongs to the GTP cyclohydrolase I family. As to quaternary structure, homomer.

The catalysed reaction is GTP + H2O = 7,8-dihydroneopterin 3'-triphosphate + formate + H(+). It participates in cofactor biosynthesis; 7,8-dihydroneopterin triphosphate biosynthesis; 7,8-dihydroneopterin triphosphate from GTP: step 1/1. This chain is GTP cyclohydrolase 1, found in Caldivirga maquilingensis (strain ATCC 700844 / DSM 13496 / JCM 10307 / IC-167).